Here is a 326-residue protein sequence, read N- to C-terminus: tRNA uridine(34) hydroxylase (326 aa).

One can recognise a Rhodanese domain in the interval 123–217 (SDPEVLLIDT…YLEEVKPEES (95 aa)). The Cysteine persulfide intermediate role is filled by Cys-177. The disordered stretch occupies residues 293–326 (KSRGESHIGSDVKQVIEARRQDKVERKQRQHQEG).

Belongs to the TrhO family.

The enzyme catalyses uridine(34) in tRNA + AH2 + O2 = 5-hydroxyuridine(34) in tRNA + A + H2O. Functionally, catalyzes oxygen-dependent 5-hydroxyuridine (ho5U) modification at position 34 in tRNAs. The protein is tRNA uridine(34) hydroxylase of Shewanella loihica (strain ATCC BAA-1088 / PV-4).